Here is a 245-residue protein sequence, read N- to C-terminus: 1-(5-phosphoribosyl)-5-[(5-phosphoribosylamino)methylideneamino] imidazole-4-carboxamide isomerase (245 aa).

The active-site Proton acceptor is the aspartate 7. Aspartate 129 (proton donor) is an active-site residue.

This sequence belongs to the HisA/HisF family.

Its subcellular location is the cytoplasm. The catalysed reaction is 1-(5-phospho-beta-D-ribosyl)-5-[(5-phospho-beta-D-ribosylamino)methylideneamino]imidazole-4-carboxamide = 5-[(5-phospho-1-deoxy-D-ribulos-1-ylimino)methylamino]-1-(5-phospho-beta-D-ribosyl)imidazole-4-carboxamide. It participates in amino-acid biosynthesis; L-histidine biosynthesis; L-histidine from 5-phospho-alpha-D-ribose 1-diphosphate: step 4/9. In Proteus mirabilis (strain HI4320), this protein is 1-(5-phosphoribosyl)-5-[(5-phosphoribosylamino)methylideneamino] imidazole-4-carboxamide isomerase.